Here is a 343-residue protein sequence, read N- to C-terminus: T-cell immunoglobulin and mucin domain-containing protein 4 (343 aa).

A signal peptide spans 1–22; it reads MSKGLLLLWLVTELWWLYLTPA. The Ig-like V-type domain maps to 23–128; that stretch reads ASEDTIIGFL…WFNDVKKNVR (106 aa). At 23-279 the chain is on the extracellular side; the sequence is ASEDTIIGFL…KSHQINSRQT (257 aa). Disulfide bonds link Cys-40/Cys-112, Cys-53/Cys-64, and Cys-59/Cys-111. An N-linked (GlcNAc...) asparagine glycan is attached at Asn-220. Residues 239-258 are disordered; sequence TGSNPGILPSTSQLTTQKTT. The span at 248–258 shows a compositional bias: low complexity; it reads STSQLTTQKTT. Residues 280-300 form a helical membrane-spanning segment; the sequence is ILIIACCVGFVLMVLLFLAFL. Residues 301–343 lie on the Cytoplasmic side of the membrane; the sequence is LRGKVTGANCLQRHKRPDNTEDSDSVLNDMSHGRDDEDGIFTL. The interval 313 to 343 is disordered; that stretch reads RHKRPDNTEDSDSVLNDMSHGRDDEDGIFTL. Phosphoserine is present on residues Ser-323, Ser-325, and Ser-331.

Belongs to the immunoglobulin superfamily. TIM family. In terms of assembly, homodimer. As to expression, predominantly expressed in lymphoid tissues, such as spleen, lymph nodes, and Peyer patches. Also expressed in fetal liver, salivary gland, and spleen stromal cells, predominantly in the marginal zone and to a lesser extent throughout the white pulp. Not expressed in bone marrow-derived cells. Expressed mainly by antigen presenting cells (APCs) in T- and B-cell areas, but not by T- or B-lymphocytes.

It localises to the membrane. Functionally, phosphatidylserine receptor that plays different role in immune response including phagocytosis of apoptotic cells and T-cell regulation. Controls T-cell activation in a bimodal fashion, decreasing the activation of naive T-cells by inducing cell cycle arrest, while increasing proliferation of activated T-cells by activating AKT1 and ERK1/2 phosphorylations and subsequent signaling pathways. Also plays a role in efferocytosis which is the process by which apoptotic cells are removed by phagocytic cells. Mechanistically, promotes the engulfment of apoptotic cells or exogenous particles by securing them to phagocytes through direct binding to phosphatidylserine present on apoptotic cells, while other engulfment receptors such as MERTK efficiently recognize apoptotic cells and mediate their ingestion. Additionally, promotes autophagy process by suppressing NLRP3 inflammasome activity via activation of STK11/PRKAA1 pathway in a phosphatidylserine-dependent mechanism. In Mus musculus (Mouse), this protein is T-cell immunoglobulin and mucin domain-containing protein 4 (Timd4).